A 194-amino-acid chain; its full sequence is GTP cyclohydrolase 1 (194 aa).

3 residues coordinate Zn(2+): Cys85, His88, and Cys156.

The protein belongs to the GTP cyclohydrolase I family. As to quaternary structure, toroid-shaped homodecamer, composed of two pentamers of five dimers.

It catalyses the reaction GTP + H2O = 7,8-dihydroneopterin 3'-triphosphate + formate + H(+). It functions in the pathway cofactor biosynthesis; 7,8-dihydroneopterin triphosphate biosynthesis; 7,8-dihydroneopterin triphosphate from GTP: step 1/1. This Bacteroides fragilis (strain YCH46) protein is GTP cyclohydrolase 1.